Here is a 953-residue protein sequence, read N- to C-terminus: Serine/threonine-protein kinase ppk30 (953 aa).

Residues 57–326 (VIIQRYLSEG…IYQTLKEIME (270 aa)) form the Protein kinase domain. ATP-binding positions include 63–71 (LSEGGFSHV) and K85. D187 acts as the Proton acceptor in catalysis. Disordered regions lie at residues 343–402 (ASTY…PSVS), 427–451 (SPIP…RRAD), 538–606 (RFLP…NRMN), 641–669 (RKEP…NKDV), 748–791 (STSQ…RPIG), and 864–953 (RKSC…ESLE). Polar residues-rich tracts occupy residues 355 to 369 (RTPS…SRPA), 378 to 402 (TVQT…PSVS), and 433 to 444 (KSYSATIQTPRS). Over residues 547–557 (PSEFSSSVGSK) the composition is skewed to low complexity. The segment covering 558–575 (QNLSMDIPSVQNVSTKQK) has biased composition (polar residues). Residues 656 to 669 (LKKDQSSEVANKDV) are compositionally biased toward basic and acidic residues. The span at 748 to 766 (STSQVSHTQRLQQSISTSL) shows a compositional bias: polar residues. Composition is skewed to basic and acidic residues over residues 767 to 778 (ERVKSNTKKESN), 865 to 884 (KSCE…DLER), and 937 to 953 (PHIE…ESLE). Residues S872 and S875 each carry the phosphoserine modification.

Belongs to the protein kinase superfamily. Ser/Thr protein kinase family.

The protein resides in the cytoplasm. It catalyses the reaction L-seryl-[protein] + ATP = O-phospho-L-seryl-[protein] + ADP + H(+). It carries out the reaction L-threonyl-[protein] + ATP = O-phospho-L-threonyl-[protein] + ADP + H(+). This is Serine/threonine-protein kinase ppk30 (ppk30) from Schizosaccharomyces pombe (strain 972 / ATCC 24843) (Fission yeast).